A 510-amino-acid polypeptide reads, in one-letter code: Holliday junction branch migration ATPase PINA (510 aa).

In terms of assembly, homohexamer. Interacts with Holliday junction resolvase Hjc, interacts with helicase Hjm (Hel308).

It catalyses the reaction ATP + H2O = ADP + phosphate + H(+). Its function is as follows. Important for growth at low temperatures (less than 65 degrees Celsius in this organism). Promotes Holliday junction (HJ) branch migration and unwinds Y-shaped DNA (but not replication forks or dsDNA) in an ATP hydrolysis-dependent manner. Stimulates cleavage by HJ resolvase Hjc. Hjc, Hjm (Hel308) and PINA coordinate HJ migration and cleavage of replication forks in a coordinated way. Probably acts as an ATP-dependent pump that pulls DNA through the hexamer. The polypeptide is Holliday junction branch migration ATPase PINA (Sulfolobus acidocaldarius (strain ATCC 33909 / DSM 639 / JCM 8929 / NBRC 15157 / NCIMB 11770)).